The sequence spans 343 residues: Probable transposase for insertion sequence element (343 aa).

This sequence belongs to the transposase mutator family.

Functionally, required for the transposition of the insertion element. This Corynebacterium diphtheriae protein is Probable transposase for insertion sequence element.